A 200-amino-acid chain; its full sequence is Urease accessory protein UreG (200 aa).

GTP is bound at residue 8 to 15; that stretch reads GPVGSGKT.

Belongs to the SIMIBI class G3E GTPase family. UreG subfamily. Homodimer. UreH, UreF and UreG form a complex that acts as a GTP-hydrolysis-dependent molecular chaperone, activating the urease apoprotein by helping to assemble the nickel containing metallocenter of UreC. The UreE protein probably delivers the nickel.

It localises to the cytoplasm. Facilitates the functional incorporation of the urease nickel metallocenter. This process requires GTP hydrolysis, probably effectuated by UreG. This is Urease accessory protein UreG from Helicobacter hepaticus (strain ATCC 51449 / 3B1).